A 997-amino-acid polypeptide reads, in one-letter code: Malignant fibrous histiocytoma-amplified sequence 1 homolog (997 aa).

LRR repeat units follow at residues 32–53, 54–76, 79–100, 102–123, 125–146, 148–170, 171–192, 194–216, 218–239, 241–262, 264–286, 287–308, 310–331, and 333–354; these read SLRQLTLSCVDKRKLILPADLG, DVEVLNLGNNSLEEVPDGLQSLS, NLHVLILRRNKFLNVPTAVYHL, RLTELDISYNRLSCLTEAVGLL, KLKKLCLSHNQLRTLPRQLGML, DLEELDVSFNQITHLPDTMQGLP, SLRTLDLDHNELCSFPQQLFHV, ALEELDFSGNKMLGSLPEGIRSM, SLKILWLSSTSLCLLPDSICEL, NLESLMLDNNNLHTLPEGFGAL, KLKMLNVSSNAFQDFPVPLLQLV, DLEELYMSRNRLVVLPEVISCM, KLVTLWLDNNRIRYLPDSIVEL, and FLEELVLQGNQIAILPDDFGKL. Residues 393 to 626 form the Roc domain; the sequence is QPAVKPRLKL…EKLLSVAEHR (234 aa). In terms of domain architecture, COR spans 637-861; sequence PKSWQMLEEL…RFSVQINSHI (225 aa).

It is found in the cytoplasm. Probable GTP-binding protein. Functions in innate immunity and more specifically the inflammatory response as a regulator of the Toll-like receptor TLR2 and TLR4 signaling pathways. The sequence is that of Malignant fibrous histiocytoma-amplified sequence 1 homolog (mfhas1) from Xenopus tropicalis (Western clawed frog).